The following is a 485-amino-acid chain: Cytochrome P450 monooxygenase tndB (485 aa).

A helical transmembrane segment spans residues 20 to 40 (VYGISAVIAVGLAIYSASLAI). Cys481 lines the heme pocket.

It belongs to the cytochrome P450 family. It depends on heme as a cofactor.

It is found in the membrane. Its pathway is secondary metabolite biosynthesis; terpenoid biosynthesis. Functionally, cytochrome P450 monooxygenase; part of the gene cluster that mediates the biosynthesis of talaronoid C, a fusicoccane diterpenoid with an unprecedented tricyclic 5/8/6 ring system. The first step in the pathway is performed by the fusicoccadiene synthase tndC that possesses both prenyl transferase and terpene cyclase activity, converting isopentenyl diphosphate and dimethylallyl diphosphate into geranylgeranyl diphosphate (GGDP) and further converting GGDP into talarodiene, a precursor for talaronoid C. The remaining enzymes from the cluster include the cytochrome P450 monooxygenase tndB, the aldehyde reductase tndE and the alcohol dehydrogenase tndF that are involved in the conversion of talarodiene into talaronoid C. This is Cytochrome P450 monooxygenase tndB from Aspergillus flavipes.